Reading from the N-terminus, the 111-residue chain is Putative pterin-4-alpha-carbinolamine dehydratase (111 aa).

It belongs to the pterin-4-alpha-carbinolamine dehydratase family.

The enzyme catalyses (4aS,6R)-4a-hydroxy-L-erythro-5,6,7,8-tetrahydrobiopterin = (6R)-L-erythro-6,7-dihydrobiopterin + H2O. The sequence is that of Putative pterin-4-alpha-carbinolamine dehydratase from Chlorobaculum tepidum (strain ATCC 49652 / DSM 12025 / NBRC 103806 / TLS) (Chlorobium tepidum).